We begin with the raw amino-acid sequence, 205 residues long: MKMNYPIEYYKEKMKFLRDNSERYILPITCLCLTSVVITSCLFAALFVAVRDCKRDSFLEDTTTAITTSSSIATTYRDNLVIHCPRDWISHNGICLLSTGEKVGFRQGIQKCEKLGSDMIGKSEEEMKALKNIWTGNDHSRFWVDNRAAASTFDPVNECAYGTRSSVSEVPKVLTSPCSVRRYLVCKKTDNSYPTTQSSFYNQYE.

Positions 84–187 (CPRDWISHNG…CSVRRYLVCK (104 aa)) constitute a C-type lectin domain.

The sequence is that of Putative C-type lectin protein FPV001/FPV260 from Fowlpox virus (strain NVSL) (FPV).